The chain runs to 334 residues: Porphobilinogen deaminase (334 aa).

Cysteine 258 is modified (S-(dipyrrolylmethanemethyl)cysteine).

Belongs to the HMBS family. In terms of assembly, monomer. Dipyrromethane serves as cofactor.

The catalysed reaction is 4 porphobilinogen + H2O = hydroxymethylbilane + 4 NH4(+). It participates in porphyrin-containing compound metabolism; protoporphyrin-IX biosynthesis; coproporphyrinogen-III from 5-aminolevulinate: step 2/4. In terms of biological role, tetrapolymerization of the monopyrrole PBG into the hydroxymethylbilane pre-uroporphyrinogen in several discrete steps. The chain is Porphobilinogen deaminase from Ralstonia nicotianae (strain ATCC BAA-1114 / GMI1000) (Ralstonia solanacearum).